A 257-amino-acid polypeptide reads, in one-letter code: Zinc import ATP-binding protein ZnuC (257 aa).

In terms of domain architecture, ABC transporter spans 5–220 (VELQSVTVTF…PSYVALFGQQ (216 aa)). An ATP-binding site is contributed by 37 to 44 (GPNGAGKS). Positions 234–257 (HEHDLAGSPVGPCQHNKQHGHDNA) are disordered.

Belongs to the ABC transporter superfamily. Zinc importer (TC 3.A.1.15.5) family. As to quaternary structure, the complex is composed of two ATP-binding proteins (ZnuC), two transmembrane proteins (ZnuB) and a solute-binding protein (ZnuA).

It is found in the cell inner membrane. The enzyme catalyses Zn(2+)(out) + ATP(in) + H2O(in) = Zn(2+)(in) + ADP(in) + phosphate(in) + H(+)(in). Part of the ABC transporter complex ZnuABC involved in zinc import. Responsible for energy coupling to the transport system. This Photobacterium profundum (strain SS9) protein is Zinc import ATP-binding protein ZnuC.